A 359-amino-acid chain; its full sequence is Doublesex- and mab-3-related transcription factor B1 (359 aa).

The DM DNA-binding region spans 7 to 54 (CSRCRNHGYLVPVKGHTGKCRWKQCICDKCYLITERQKIMAAQKVLRT). Disordered stretches follow at residues 111-149 (PPQAPSPGPSTFQLGPSGRPGPSTFQPGPGAPGGLRDRS) and 262-359 (SGLV…EQSN). 2 stretches are compositionally biased toward pro residues: residues 277 to 299 (CSPPPPPPPPPPPPLPAPPPQPQ) and 315 to 325 (LPPPPPPPSPP). Residues 348–359 (EPSQDSPQEQSN) show a composition bias toward polar residues.

It belongs to the DMRT family. In terms of tissue distribution, brain.

It localises to the nucleus. In Mus musculus (Mouse), this protein is Doublesex- and mab-3-related transcription factor B1 (Dmrtb1).